The chain runs to 332 residues: DNA-directed RNA polymerase subunit alpha (332 aa).

The tract at residues 1–234 (MIEYVIPKKL…NHLQIITDSL (234 aa)) is alpha N-terminal domain (alpha-NTD). Positions 264–332 (AVYSKKIDEL…KFGLSLKKGG (69 aa)) are alpha C-terminal domain (alpha-CTD).

It belongs to the RNA polymerase alpha chain family. In terms of assembly, homodimer. The RNAP catalytic core consists of 2 alpha, 1 beta, 1 beta' and 1 omega subunit. When a sigma factor is associated with the core the holoenzyme is formed, which can initiate transcription.

The catalysed reaction is RNA(n) + a ribonucleoside 5'-triphosphate = RNA(n+1) + diphosphate. DNA-dependent RNA polymerase catalyzes the transcription of DNA into RNA using the four ribonucleoside triphosphates as substrates. The polypeptide is DNA-directed RNA polymerase subunit alpha (Pseudothermotoga lettingae (strain ATCC BAA-301 / DSM 14385 / NBRC 107922 / TMO) (Thermotoga lettingae)).